The primary structure comprises 273 residues: Large ribosomal subunit protein uL2 (273 aa).

Residues 221–273 form a disordered region; it reads RGTAMNPVDHPHGGGEGRNFGKHPVTPWGIQTKGKKTRSNKRTDKFIVRRRSK.

Belongs to the universal ribosomal protein uL2 family. As to quaternary structure, part of the 50S ribosomal subunit. Forms a bridge to the 30S subunit in the 70S ribosome.

Its function is as follows. One of the primary rRNA binding proteins. Required for association of the 30S and 50S subunits to form the 70S ribosome, for tRNA binding and peptide bond formation. It has been suggested to have peptidyltransferase activity; this is somewhat controversial. Makes several contacts with the 16S rRNA in the 70S ribosome. The sequence is that of Large ribosomal subunit protein uL2 from Sodalis glossinidius (strain morsitans).